The primary structure comprises 492 residues: Serine carboxypeptidase-like 31 (492 aa).

The N-terminal stretch at 1-30 (MDNYQTKNISNLLTSLCFTTLLILAPVVIC) is a signal peptide. Intrachain disulfides connect C105–C376, C270–C283, and C307–C344. The N-linked (GlcNAc...) asparagine glycan is linked to N156. S198 is a catalytic residue. N-linked (GlcNAc...) asparagine glycans are attached at residues N221 and N271. N-linked (GlcNAc...) asparagine glycosylation is found at N372 and N383. Residues D413 and H465 contribute to the active site.

Belongs to the peptidase S10 family. In terms of tissue distribution, expressed in roots, senescent leaves, stems, flowers and siliques.

It is found in the secreted. Probable carboxypeptidase. The polypeptide is Serine carboxypeptidase-like 31 (SCPL31) (Arabidopsis thaliana (Mouse-ear cress)).